Reading from the N-terminus, the 222-residue chain is DnaJ homolog subfamily B member 9 (222 aa).

The signal sequence occupies residues 1–23 (MATPQSVFVFAICILMITELILA). The J domain occupies 26–90 (SYYDILGVPK…NSRKEYDTIG (65 aa)). Residues 91–222 (HSAFTNGKGQ…VTTYTDCSGQ (132 aa)) form a divergent targeting domain region. At Ser133 the chain carries Phosphoserine.

Interacts with HSPA5/BiP; interaction is direct. Interacts with ERN1/IRE1 (via the luminal region). Interacts with DERL1. In terms of processing, not N-glycosylated.

It localises to the endoplasmic reticulum lumen. Functionally, co-chaperone for Hsp70 protein HSPA5/BiP that acts as a key repressor of the ERN1/IRE1-mediated unfolded protein response (UPR). J domain-containing co-chaperones stimulate the ATPase activity of Hsp70 proteins and are required for efficient substrate recognition by Hsp70 proteins. In the unstressed endoplasmic reticulum, interacts with the luminal region of ERN1/IRE1 and selectively recruits HSPA5/BiP: HSPA5/BiP disrupts the dimerization of the active ERN1/IRE1 luminal region, thereby inactivating ERN1/IRE1. Also involved in endoplasmic reticulum-associated degradation (ERAD) of misfolded proteins. Required for survival of B-cell progenitors and normal antibody production. In Mus musculus (Mouse), this protein is DnaJ homolog subfamily B member 9.